Consider the following 159-residue polypeptide: Cytochrome c-type biogenesis protein CcmE (159 aa).

At Met1 to Arg8 the chain is on the cytoplasmic side. Residues Leu9–Ala29 traverse the membrane as a helical; Signal-anchor for type II membrane protein segment. Topologically, residues Leu30–Tyr159 are periplasmic. Residues His124 and Tyr128 each contribute to the heme site. The tract at residues Glu135–Tyr159 is disordered. Basic and acidic residues predominate over residues Ala136–Tyr159.

Belongs to the CcmE/CycJ family.

The protein resides in the cell inner membrane. Functionally, heme chaperone required for the biogenesis of c-type cytochromes. Transiently binds heme delivered by CcmC and transfers the heme to apo-cytochromes in a process facilitated by CcmF and CcmH. The sequence is that of Cytochrome c-type biogenesis protein CcmE from Marinobacter nauticus (strain ATCC 700491 / DSM 11845 / VT8) (Marinobacter aquaeolei).